A 1361-amino-acid polypeptide reads, in one-letter code: DNA-directed RNA polymerase subunit beta'' (1361 aa).

Zn(2+)-binding residues include Cys-224, Cys-295, Cys-302, and Cys-305.

It belongs to the RNA polymerase beta' chain family. RpoC2 subfamily. In plastids the minimal PEP RNA polymerase catalytic core is composed of four subunits: alpha, beta, beta', and beta''. When a (nuclear-encoded) sigma factor is associated with the core the holoenzyme is formed, which can initiate transcription. The cofactor is Zn(2+).

It is found in the plastid. It localises to the chloroplast. The catalysed reaction is RNA(n) + a ribonucleoside 5'-triphosphate = RNA(n+1) + diphosphate. DNA-dependent RNA polymerase catalyzes the transcription of DNA into RNA using the four ribonucleoside triphosphates as substrates. The protein is DNA-directed RNA polymerase subunit beta'' of Spinacia oleracea (Spinach).